Reading from the N-terminus, the 148-residue chain is Lysozyme C-1 (148 aa).

The N-terminal stretch at 1-18 (MKALLTLGLLLLSVTAQA) is a signal peptide. A C-type lysozyme domain is found at 19 to 148 (KVYNRCELAR…LSQYIRNCGV (130 aa)). 4 cysteine pairs are disulfide-bonded: Cys24–Cys146, Cys48–Cys134, Cys83–Cys99, and Cys95–Cys113. Catalysis depends on residues Glu53 and Asp71.

The protein belongs to the glycosyl hydrolase 22 family. Monomer. In terms of tissue distribution, expressed strongly only in small intestine.

It is found in the secreted. It carries out the reaction Hydrolysis of (1-&gt;4)-beta-linkages between N-acetylmuramic acid and N-acetyl-D-glucosamine residues in a peptidoglycan and between N-acetyl-D-glucosamine residues in chitodextrins.. Functionally, lysozymes have primarily a bacteriolytic function; those in tissues and body fluids are associated with the monocyte-macrophage system and enhance the activity of immunoagents. Lyz1 is active against a range of Gram-positive and Gram-negative bacteria. Less effective than Lyz2 in killing Gram-negative bacteria. Lyz1 and Lyz2 are equally effective in killing Gram-positive bacteria. The chain is Lysozyme C-1 (Lyz1) from Mus musculus (Mouse).